The sequence spans 67 residues: Large ribosomal subunit protein bL35 (67 aa).

It belongs to the bacterial ribosomal protein bL35 family.

The protein is Large ribosomal subunit protein bL35 of Acidiphilium cryptum (strain JF-5).